The sequence spans 303 residues: DDRGK domain-containing protein 1 (303 aa).

Residues 1 to 2 (MD) lie on the Lumenal side of the membrane. Residues 3–23 (LILLIGIATALLIILLTLYFL) form a helical membrane-spanning segment. The Cytoplasmic segment spans residues 24 to 303 (QKRNAPAETK…TPVTASEGGA (280 aa)). 2 disordered regions span residues 31–53 (ETKAAAQPQRGVPLRAQEGVPRR) and 84–160 (AIDP…AEVE). Over residues 106-160 (LDEKMGAKKRAKMEAKEQKRLQREQELHDREQRKVKEAKEEAERKQQDDLDAEVE) the composition is skewed to basic and acidic residues.

Belongs to the DDRGK1 family. In terms of assembly, interacts with Atg9; the interaction is transient.

It localises to the endoplasmic reticulum membrane. Substrate adapter for ufmylation, the covalent attachment of the ubiquitin-like modifier UFM1 to substrate proteins. Required for ufmylation of Atg9; protects the nervous system during aging, possibly by stabilizing Atg9 and supporting its function. This chain is DDRGK domain-containing protein 1, found in Drosophila grimshawi (Hawaiian fruit fly).